Reading from the N-terminus, the 94-residue chain is Putative pterin-4-alpha-carbinolamine dehydratase (94 aa).

It belongs to the pterin-4-alpha-carbinolamine dehydratase family.

It catalyses the reaction (4aS,6R)-4a-hydroxy-L-erythro-5,6,7,8-tetrahydrobiopterin = (6R)-L-erythro-6,7-dihydrobiopterin + H2O. This chain is Putative pterin-4-alpha-carbinolamine dehydratase, found in Mycolicibacterium smegmatis (strain ATCC 700084 / mc(2)155) (Mycobacterium smegmatis).